A 516-amino-acid chain; its full sequence is Citrate synthase, glyoxysomal (516 aa).

The transit peptide at 1–43 directs the protein to the glyoxysome; the sequence is MPTDMELSPSNVARHRLAVLAAHLSAASLEPPVMASSLEAHCV. Catalysis depends on residues His-329, His-368, and Asp-424.

It belongs to the citrate synthase family.

It is found in the glyoxysome. It catalyses the reaction oxaloacetate + acetyl-CoA + H2O = citrate + CoA + H(+). Its pathway is carbohydrate metabolism; glyoxylate cycle; isocitrate from oxaloacetate: step 1/2. This chain is Citrate synthase, glyoxysomal, found in Cucurbita maxima (Pumpkin).